We begin with the raw amino-acid sequence, 132 residues long: Glycine cleavage system H protein (132 aa).

One can recognise a Lipoyl-binding domain in the interval 24 to 106 (TVRVGITDFA…YGAGWLLDVQ (83 aa)). K65 carries the N6-lipoyllysine modification.

This sequence belongs to the GcvH family. The glycine cleavage system is composed of four proteins: P, T, L and H. The cofactor is (R)-lipoate.

Its function is as follows. The glycine cleavage system catalyzes the degradation of glycine. The H protein shuttles the methylamine group of glycine from the P protein to the T protein. This is Glycine cleavage system H protein from Mycobacterium avium (strain 104).